Consider the following 372-residue polypeptide: Glutamate 5-kinase (372 aa).

Lysine 14 contributes to the ATP binding site. Substrate-binding residues include serine 54, aspartate 141, and asparagine 153. Threonine 173 to aspartate 174 is an ATP binding site. The 79-residue stretch at arginine 280–serine 358 folds into the PUA domain.

This sequence belongs to the glutamate 5-kinase family.

It localises to the cytoplasm. It catalyses the reaction L-glutamate + ATP = L-glutamyl 5-phosphate + ADP. It participates in amino-acid biosynthesis; L-proline biosynthesis; L-glutamate 5-semialdehyde from L-glutamate: step 1/2. Functionally, catalyzes the transfer of a phosphate group to glutamate to form L-glutamate 5-phosphate. The protein is Glutamate 5-kinase of Methylibium petroleiphilum (strain ATCC BAA-1232 / LMG 22953 / PM1).